Consider the following 553-residue polypeptide: Methyl-coenzyme M reductase subunit alpha (553 aa).

Gln-151 is a binding site for coenzyme F430. Coenzyme B contacts are provided by residues Arg-229, 260–261 (KH), and Arg-274. Residues Tyr-336 and Tyr-447 each coordinate coenzyme M.

Belongs to the methyl-coenzyme M reductase alpha subunit family. MCR is a hexamer of two alpha, two beta, and two gamma chains, forming a dimer of heterotrimers. It depends on coenzyme F430 as a cofactor.

Its subcellular location is the cytoplasm. It catalyses the reaction coenzyme B + methyl-coenzyme M = methane + coenzyme M-coenzyme B heterodisulfide. It participates in one-carbon metabolism; methyl-coenzyme M reduction; methane from methyl-coenzyme M: step 1/1. Functionally, component of the methyl-coenzyme M reductase (MCR) I that catalyzes the reductive cleavage of methyl-coenzyme M (CoM-S-CH3 or 2-(methylthio)ethanesulfonate) using coenzyme B (CoB or 7-mercaptoheptanoylthreonine phosphate) as reductant which results in the production of methane and the mixed heterodisulfide of CoB and CoM (CoM-S-S-CoB). This is the final step in methanogenesis. This chain is Methyl-coenzyme M reductase subunit alpha (mcrA), found in Methanococcus vannielii.